A 416-amino-acid chain; its full sequence is CCA-adding enzyme (416 aa).

ATP-binding residues include Ser-42 and Lys-45. Positions 42 and 45 each coordinate CTP. Asp-54, Asp-56, and Asp-107 together coordinate Mg(2+). The ATP site is built by His-130, Lys-150, and Tyr-159. CTP contacts are provided by His-130, Lys-150, and Tyr-159.

This sequence belongs to the tRNA nucleotidyltransferase/poly(A) polymerase family. Archaeal CCA-adding enzyme subfamily. As to quaternary structure, homodimer. The cofactor is Mg(2+).

It catalyses the reaction a tRNA precursor + 2 CTP + ATP = a tRNA with a 3' CCA end + 3 diphosphate. The enzyme catalyses a tRNA with a 3' CCA end + 2 CTP + ATP = a tRNA with a 3' CCACCA end + 3 diphosphate. Its function is as follows. Catalyzes the addition and repair of the essential 3'-terminal CCA sequence in tRNAs without using a nucleic acid template. Adds these three nucleotides in the order of C, C, and A to the tRNA nucleotide-73, using CTP and ATP as substrates and producing inorganic pyrophosphate. tRNA 3'-terminal CCA addition is required both for tRNA processing and repair. Also involved in tRNA surveillance by mediating tandem CCA addition to generate a CCACCA at the 3' terminus of unstable tRNAs. While stable tRNAs receive only 3'-terminal CCA, unstable tRNAs are marked with CCACCA and rapidly degraded. This is CCA-adding enzyme from Sulfolobus acidocaldarius (strain ATCC 33909 / DSM 639 / JCM 8929 / NBRC 15157 / NCIMB 11770).